The following is a 137-amino-acid chain: Large-conductance mechanosensitive channel (137 aa).

The next 2 membrane-spanning stretches (helical) occupy residues 10-30 and 76-96; these read FAMR…AAFG and GAFI…FMAI.

It belongs to the MscL family. In terms of assembly, homopentamer.

It is found in the cell inner membrane. Functionally, channel that opens in response to stretch forces in the membrane lipid bilayer. May participate in the regulation of osmotic pressure changes within the cell. The protein is Large-conductance mechanosensitive channel of Pectobacterium carotovorum subsp. carotovorum (strain PC1).